The chain runs to 231 residues: uncharacterized protein (231 aa).

Basic and acidic residues predominate over residues 1–10 (MDGKKREVEN). Positions 1-35 (MDGKKREVENGKNGNNIKDGNSSNTTNYGKDTKTT) are disordered. Residues 11 to 24 (GKNGNNIKDGNSSN) are compositionally biased toward low complexity. Residues 25–35 (TTNYGKDTKTT) show a composition bias toward polar residues.

This is an uncharacterized protein from Aquifex aeolicus (strain VF5).